Reading from the N-terminus, the 746-residue chain is MRAYPTIQRPSIKRDPRLHALLAGRLHDPFSFLGPHVEHGHWVVRAFHPHAASIWINTDDGFESMTRAHPAGVFEWWGLIPLPLPYQLRIEEASFEAPAHVYDIYDAYAFPPQVSEHDLYLFNEGRLHQAYRMLGSHLVEMEGVAGVRFSVWAPNAERVSVVGSFNRWDGRIHPMVSHGASGVWELFIPGVPTDSFYKYEIRNRDTGAILLKTDPYARHYEVRPGTAARAPSASRMTWGDARWMAQRAVWDWLATPLNIYEVHAGSWKRHANGSFYSYRELADHLLPYVREMGYTHIELLPISEHPLDESWGYQTTGYFAATSRYGTSDDLKFFINACHQEGIGVILDWVPAHFPQDAFALARFDGSALYEHEDPRMGLHQDWGTHIFNYGRNEVKSFLLSSAHYWLSEFHLDGLRVDAVASMLYLDYSRLPGEWLPNRYGGRENLEAIDFLRELNIMVHQEFPGALTLAEESTAWPGVSRPTYVGGLGFSMKWNMGWMNDTLVYMRNDPVYRRFHHEQLTFGQLYAYSENFVLPFSHDEVVHGKGSLLGKMPGDAWQQFANLRLLFTYQMTYPGKKLNFMGNEFAQGREWNSSRELDWYQLGDGWHEGVKMAARDLNQLYSAVAALHQRDFEPEGFSWVDCHDADNSVISYLRFARNGSFALVVLNFTPVPRYRYRIGVPTSGSYQEIFNSDSRYYGGSDLGNMGSIRTTGQPSMERMDSIVITLPPLAGLIFVHTDLPAINTDG.

The active-site Nucleophile is the aspartate 418. Glutamate 471 functions as the Proton donor in the catalytic mechanism.

The protein belongs to the glycosyl hydrolase 13 family. GlgB subfamily. In terms of assembly, monomer.

It carries out the reaction Transfers a segment of a (1-&gt;4)-alpha-D-glucan chain to a primary hydroxy group in a similar glucan chain.. Its pathway is glycan biosynthesis; glycogen biosynthesis. Its function is as follows. Catalyzes the formation of the alpha-1,6-glucosidic linkages in glycogen by scission of a 1,4-alpha-linked oligosaccharide from growing alpha-1,4-glucan chains and the subsequent attachment of the oligosaccharide to the alpha-1,6 position. In Nitrosospira multiformis (strain ATCC 25196 / NCIMB 11849 / C 71), this protein is 1,4-alpha-glucan branching enzyme GlgB.